Consider the following 356-residue polypeptide: Putative aminopeptidase FrvX (356 aa).

Positions 61 and 175 each coordinate a divalent metal cation. The active-site Proton acceptor is Glu205. Glu206, Asp228, and His316 together coordinate a divalent metal cation.

The protein belongs to the peptidase M42 family. It depends on a divalent metal cation as a cofactor.

In Escherichia coli (strain K12), this protein is Putative aminopeptidase FrvX (frvX).